We begin with the raw amino-acid sequence, 209 residues long: MIGLIGRKVGMTRVFTEEGVSIPVTVVEVEANRVSQVKTLETDGYAAIQVTAGSKKANRVNKAEAGHFAKAGVEAGRGLWEFRLENGEEFEVGAELTVELFNETKKVDVTGTSKGKGFQGAVKRWNFRTQDMTHGNSLSHRAPGSIGQCQTPGRVFKGKKMAGHMGAERVTTQNLEIVRVDAERNLLLIKGAVPGATGGNVIVKPAVKA.

Position 150 is an N5-methylglutamine (Q150).

It belongs to the universal ribosomal protein uL3 family. As to quaternary structure, part of the 50S ribosomal subunit. Forms a cluster with proteins L14 and L19. In terms of processing, methylated by PrmB.

In terms of biological role, one of the primary rRNA binding proteins, it binds directly near the 3'-end of the 23S rRNA, where it nucleates assembly of the 50S subunit. In Vibrio parahaemolyticus serotype O3:K6 (strain RIMD 2210633), this protein is Large ribosomal subunit protein uL3.